We begin with the raw amino-acid sequence, 239 residues long: Purine nucleoside phosphorylase DeoD-type (239 aa).

Residue His-5 coordinates a purine D-ribonucleoside. Phosphate-binding positions include Gly-21, Arg-25, Arg-44, and 88 to 91; that span reads RVGS. Residues 180-182 and 204-205 each bind a purine D-ribonucleoside; these read EME and SD. Residue Asp-205 is the Proton donor of the active site.

This sequence belongs to the PNP/UDP phosphorylase family. Homohexamer; trimer of homodimers.

It carries out the reaction a purine D-ribonucleoside + phosphate = a purine nucleobase + alpha-D-ribose 1-phosphate. The catalysed reaction is a purine 2'-deoxy-D-ribonucleoside + phosphate = a purine nucleobase + 2-deoxy-alpha-D-ribose 1-phosphate. Catalyzes the reversible phosphorolytic breakdown of the N-glycosidic bond in the beta-(deoxy)ribonucleoside molecules, with the formation of the corresponding free purine bases and pentose-1-phosphate. This chain is Purine nucleoside phosphorylase DeoD-type, found in Myxococcus xanthus (strain DK1622).